Here is a 157-residue protein sequence, read N- to C-terminus: Lectin (157 aa).

An intrachain disulfide couples C37 to C54.

In terms of assembly, homodimer. As to expression, detected in fruits (at protein level).

It is found in the secreted. In terms of biological role, binds with high affinity specifically to chito-oligosaccharides. May play a role in plant defense against pathogens by directly binding with the chitin cell wall. Forms filamentous structures at higher concentrations and may promote wound healing by forming filaments with phloem proteins like PP1. The chain is Lectin from Coccinia grandis (Ivy gourd).